Reading from the N-terminus, the 427-residue chain is 3-phosphoshikimate 1-carboxyvinyltransferase (427 aa).

Residues lysine 22, serine 23, and arginine 27 each coordinate 3-phosphoshikimate. Position 22 (lysine 22) interacts with phosphoenolpyruvate. Residues glycine 96 and arginine 124 each coordinate phosphoenolpyruvate. The 3-phosphoshikimate site is built by serine 169, serine 170, glutamine 171, serine 197, aspartate 313, asparagine 336, and lysine 340. Glutamine 171 contacts phosphoenolpyruvate. Aspartate 313 (proton acceptor) is an active-site residue. Residues arginine 344, arginine 386, and lysine 411 each coordinate phosphoenolpyruvate.

This sequence belongs to the EPSP synthase family. In terms of assembly, monomer.

The protein resides in the cytoplasm. The catalysed reaction is 3-phosphoshikimate + phosphoenolpyruvate = 5-O-(1-carboxyvinyl)-3-phosphoshikimate + phosphate. It participates in metabolic intermediate biosynthesis; chorismate biosynthesis; chorismate from D-erythrose 4-phosphate and phosphoenolpyruvate: step 6/7. Functionally, catalyzes the transfer of the enolpyruvyl moiety of phosphoenolpyruvate (PEP) to the 5-hydroxyl of shikimate-3-phosphate (S3P) to produce enolpyruvyl shikimate-3-phosphate and inorganic phosphate. The polypeptide is 3-phosphoshikimate 1-carboxyvinyltransferase (Salmonella heidelberg (strain SL476)).